The sequence spans 363 residues: Pyrimidine monooxygenase RutA (363 aa).

FMN is bound by residues 49-50 (IK), Asn115, Glu124, 140-141 (RY), and Ser190.

It belongs to the NtaA/SnaA/DszA monooxygenase family. RutA subfamily.

The enzyme catalyses uracil + FMNH2 + NADH + O2 = (Z)-3-ureidoacrylate + FMN + NAD(+) + H2O + H(+). The catalysed reaction is thymine + FMNH2 + NADH + O2 = (Z)-2-methylureidoacrylate + FMN + NAD(+) + H2O + H(+). Its function is as follows. Catalyzes the pyrimidine ring opening between N-3 and C-4 by an unusual flavin hydroperoxide-catalyzed mechanism, adding oxygen atoms in the process to yield ureidoacrylate peracid, that immediately reacts with FMN forming ureidoacrylate and FMN-N(5)-oxide. The FMN-N(5)-oxide reacts spontaneously with NADH to produce FMN. Requires the flavin reductase RutF to regenerate FMN in vivo. The protein is Pyrimidine monooxygenase RutA of Pantoea ananatis (strain LMG 20103).